Consider the following 567-residue polypeptide: Dihydroxy-acid dehydratase (567 aa).

Cysteine 52 is a binding site for [2Fe-2S] cluster. Mg(2+) is bound at residue aspartate 84. Cysteine 125 is a binding site for [2Fe-2S] cluster. Mg(2+) is bound by residues aspartate 126 and lysine 127. Lysine 127 is modified (N6-carboxylysine). Cysteine 197 contacts [2Fe-2S] cluster. Residue glutamate 448 coordinates Mg(2+). The active-site Proton acceptor is the serine 474.

Belongs to the IlvD/Edd family. Homodimer. Requires [2Fe-2S] cluster as cofactor. Mg(2+) serves as cofactor.

The enzyme catalyses (2R)-2,3-dihydroxy-3-methylbutanoate = 3-methyl-2-oxobutanoate + H2O. It catalyses the reaction (2R,3R)-2,3-dihydroxy-3-methylpentanoate = (S)-3-methyl-2-oxopentanoate + H2O. Its pathway is amino-acid biosynthesis; L-isoleucine biosynthesis; L-isoleucine from 2-oxobutanoate: step 3/4. The protein operates within amino-acid biosynthesis; L-valine biosynthesis; L-valine from pyruvate: step 3/4. Functionally, functions in the biosynthesis of branched-chain amino acids. Catalyzes the dehydration of (2R,3R)-2,3-dihydroxy-3-methylpentanoate (2,3-dihydroxy-3-methylvalerate) into 2-oxo-3-methylpentanoate (2-oxo-3-methylvalerate) and of (2R)-2,3-dihydroxy-3-methylbutanoate (2,3-dihydroxyisovalerate) into 2-oxo-3-methylbutanoate (2-oxoisovalerate), the penultimate precursor to L-isoleucine and L-valine, respectively. This chain is Dihydroxy-acid dehydratase, found in Streptococcus pneumoniae (strain CGSP14).